Here is a 138-residue protein sequence, read N- to C-terminus: Putative protein encoded by LINC02912 (138 aa).

A run of 2 helical transmembrane segments spans residues 32-52 and 65-85; these read FALSFLIGKMGIIILSVCLIC and CLINVSFSLYSCFIVFVTISQ. The disordered stretch occupies residues 109 to 138; it reads SGGQSQHSWPCPERSKNLPQVSKQLRNRAG.

It is found in the membrane. In Homo sapiens (Human), this protein is Putative protein encoded by LINC02912.